The primary structure comprises 86 residues: U2-sicaritoxin-Li1b (86 aa).

Residues 1–20 (MKIELFLVVIFALAIHMATA) form the signal peptide. The propeptide occupies 21 to 33 (EEVIESDIEPAER). Intrachain disulfides connect C35–C53, C42–C62, C52–C71, and C64–C69. A Lysine amide modification is found at K85.

This sequence belongs to the neurotoxin 39 family. As to expression, expressed by the venom gland.

The protein resides in the secreted. In terms of biological role, toxin active against S.frugiperda larvae. May act on sodium channels (Nav). The protein is U2-sicaritoxin-Li1b of Loxosceles intermedia (Brown spider).